Here is a 731-residue protein sequence, read N- to C-terminus: MFKTHKIEIEWAGRPLTLETGKIARQADGAVIATYGETIVLATVVSAKSPKPDQDFFPLTVNYQEKSYAVGRIPGGYLKRESRPSENETLVSRLIDRPIRPLFVEGYKNDTQVIVSVIQHDLENNPDILAMIASSAALTLSGVPFMGPIAGARVGYCNGQYVLNPHMDEMPESKLDLVVAGTESAVLMVESEAQELPEDIMLGAVMFGHKGLQPVLDAIIKLAEVAAKDPRDFVPEDLSDLEKAMQEMAEQDIRKAYTITDKQERYAAIDALKTEIINKFMPETEEDCQFSTDQIATVFKQLQAKIVRGNILDTKKRIDGRNLSTVRPIQSEVSILPRTHGSALFTRGETQAIVVATLGTGEDEQYIDALTGMYKETFLLHYNFPPFSVGETGRLGSPGRREIGHGKLAWRAIHPMLPTKESFPYTIRAVSEITESNGSSSMATVCGTSLALMDAGVPLARPVAGIAMGLIKEGERFAVLSDILGDEDHLGDMDFKVAGTENGITALQMDIKIDGITEEIMKIALEQAKDGRIHILNEMAKALTSARAELSEFSPRIEVINIAVDKIRDVIGSGGKVIREIVEQTGAKINIEDDGTIKIASADAKTIEAAKRWIHSIVDEPEVGAIYQGTVVKTADFGAFINFFGSRDGLVHISQLASERVTKTTDIVKEGDKVWVKLMGFDERGKVRLSMKAVDQKTGKEMTDDKSVKEEKCMDEKKQPENKRRRKKKEE.

Mg(2+) contacts are provided by D488 and D494. A KH domain is found at 555 to 614; that stretch reads PRIEVINIAVDKIRDVIGSGGKVIREIVEQTGAKINIEDDGTIKIASADAKTIEAAKRWI. The 69-residue stretch at 624-692 folds into the S1 motif domain; that stretch reads GAIYQGTVVK…ERGKVRLSMK (69 aa). Residues 693–731 form a disordered region; sequence AVDQKTGKEMTDDKSVKEEKCMDEKKQPENKRRRKKKEE. The span at 694-722 shows a compositional bias: basic and acidic residues; it reads VDQKTGKEMTDDKSVKEEKCMDEKKQPEN.

This sequence belongs to the polyribonucleotide nucleotidyltransferase family. The cofactor is Mg(2+).

The protein localises to the cytoplasm. The catalysed reaction is RNA(n+1) + phosphate = RNA(n) + a ribonucleoside 5'-diphosphate. Its function is as follows. Involved in mRNA degradation. Catalyzes the phosphorolysis of single-stranded polyribonucleotides processively in the 3'- to 5'-direction. The protein is Polyribonucleotide nucleotidyltransferase of Bartonella tribocorum (strain CIP 105476 / IBS 506).